Reading from the N-terminus, the 427-residue chain is Trigger factor (427 aa).

The region spanning 163–248 (GDTVVIDFVG…IHEVKAKEVP (86 aa)) is the PPIase FKBP-type domain.

The protein belongs to the FKBP-type PPIase family. Tig subfamily.

The protein localises to the cytoplasm. The enzyme catalyses [protein]-peptidylproline (omega=180) = [protein]-peptidylproline (omega=0). Its function is as follows. Involved in protein export. Acts as a chaperone by maintaining the newly synthesized protein in an open conformation. Functions as a peptidyl-prolyl cis-trans isomerase. This chain is Trigger factor, found in Streptococcus pneumoniae (strain Taiwan19F-14).